The primary structure comprises 342 residues: 4-hydroxy-3-methylbut-2-enyl diphosphate reductase (342 aa).

Residue Cys47 participates in [4Fe-4S] cluster binding. (2E)-4-hydroxy-3-methylbut-2-enyl diphosphate is bound by residues His78 and His111. Dimethylallyl diphosphate contacts are provided by His78 and His111. Positions 78 and 111 each coordinate isopentenyl diphosphate. Cys133 lines the [4Fe-4S] cluster pocket. His161 contacts (2E)-4-hydroxy-3-methylbut-2-enyl diphosphate. His161 provides a ligand contact to dimethylallyl diphosphate. His161 serves as a coordination point for isopentenyl diphosphate. Residue Glu163 is the Proton donor of the active site. A (2E)-4-hydroxy-3-methylbut-2-enyl diphosphate-binding site is contributed by Thr201. Cys231 provides a ligand contact to [4Fe-4S] cluster. (2E)-4-hydroxy-3-methylbut-2-enyl diphosphate is bound by residues Ser259, Ser260, Asn261, and Ser303. Dimethylallyl diphosphate contacts are provided by Ser259, Ser260, Asn261, and Ser303. Positions 259, 260, 261, and 303 each coordinate isopentenyl diphosphate.

Belongs to the IspH family. [4Fe-4S] cluster is required as a cofactor.

It catalyses the reaction isopentenyl diphosphate + 2 oxidized [2Fe-2S]-[ferredoxin] + H2O = (2E)-4-hydroxy-3-methylbut-2-enyl diphosphate + 2 reduced [2Fe-2S]-[ferredoxin] + 2 H(+). It carries out the reaction dimethylallyl diphosphate + 2 oxidized [2Fe-2S]-[ferredoxin] + H2O = (2E)-4-hydroxy-3-methylbut-2-enyl diphosphate + 2 reduced [2Fe-2S]-[ferredoxin] + 2 H(+). The protein operates within isoprenoid biosynthesis; dimethylallyl diphosphate biosynthesis; dimethylallyl diphosphate from (2E)-4-hydroxy-3-methylbutenyl diphosphate: step 1/1. Its pathway is isoprenoid biosynthesis; isopentenyl diphosphate biosynthesis via DXP pathway; isopentenyl diphosphate from 1-deoxy-D-xylulose 5-phosphate: step 6/6. Functionally, catalyzes the conversion of 1-hydroxy-2-methyl-2-(E)-butenyl 4-diphosphate (HMBPP) into a mixture of isopentenyl diphosphate (IPP) and dimethylallyl diphosphate (DMAPP). Acts in the terminal step of the DOXP/MEP pathway for isoprenoid precursor biosynthesis. The protein is 4-hydroxy-3-methylbut-2-enyl diphosphate reductase of Anaplasma marginale (strain St. Maries).